The sequence spans 134 residues: MNPLVYFSSSSQNTHRFVEKLELPAIRIPIAGTREKLRVEQPYILLVPSYGGGSPVGAVPIQVIRFLNDPHNRSLIRGVIAAGNTNFGDAYCLAGKIISQKCQVPYLYRFELLGTAEDVVNVRKGVTEFWQRQN.

This sequence belongs to the NrdI family.

Probably involved in ribonucleotide reductase function. The sequence is that of Protein NrdI from Yersinia enterocolitica serotype O:8 / biotype 1B (strain NCTC 13174 / 8081).